Here is a 72-residue protein sequence, read N- to C-terminus: Translation initiation factor IF-1 (72 aa).

The S1-like domain occupies 1 to 72; that stretch reads MAKEGAIEVE…TRGRIVYRYK (72 aa).

Belongs to the IF-1 family. As to quaternary structure, component of the 30S ribosomal translation pre-initiation complex which assembles on the 30S ribosome in the order IF-2 and IF-3, IF-1 and N-formylmethionyl-tRNA(fMet); mRNA recruitment can occur at any time during PIC assembly.

It is found in the cytoplasm. Its function is as follows. One of the essential components for the initiation of protein synthesis. Stabilizes the binding of IF-2 and IF-3 on the 30S subunit to which N-formylmethionyl-tRNA(fMet) subsequently binds. Helps modulate mRNA selection, yielding the 30S pre-initiation complex (PIC). Upon addition of the 50S ribosomal subunit IF-1, IF-2 and IF-3 are released leaving the mature 70S translation initiation complex. The chain is Translation initiation factor IF-1 from Corynebacterium diphtheriae (strain ATCC 700971 / NCTC 13129 / Biotype gravis).